A 147-amino-acid chain; its full sequence is UPF0735 ACT domain-containing protein BH1214 (147 aa).

The 76-residue stretch at 70–145 (TLSINLEDRS…AVEKVELVGS (76 aa)) folds into the ACT domain.

It belongs to the UPF0735 family.

This is UPF0735 ACT domain-containing protein BH1214 from Halalkalibacterium halodurans (strain ATCC BAA-125 / DSM 18197 / FERM 7344 / JCM 9153 / C-125) (Bacillus halodurans).